A 476-amino-acid polypeptide reads, in one-letter code: Aspartyl/glutamyl-tRNA(Asn/Gln) amidotransferase subunit B (476 aa).

Belongs to the GatB/GatE family. GatB subfamily. Heterotrimer of A, B and C subunits.

It carries out the reaction L-glutamyl-tRNA(Gln) + L-glutamine + ATP + H2O = L-glutaminyl-tRNA(Gln) + L-glutamate + ADP + phosphate + H(+). The catalysed reaction is L-aspartyl-tRNA(Asn) + L-glutamine + ATP + H2O = L-asparaginyl-tRNA(Asn) + L-glutamate + ADP + phosphate + 2 H(+). Its function is as follows. Allows the formation of correctly charged Asn-tRNA(Asn) or Gln-tRNA(Gln) through the transamidation of misacylated Asp-tRNA(Asn) or Glu-tRNA(Gln) in organisms which lack either or both of asparaginyl-tRNA or glutaminyl-tRNA synthetases. The reaction takes place in the presence of glutamine and ATP through an activated phospho-Asp-tRNA(Asn) or phospho-Glu-tRNA(Gln). This Clostridium botulinum (strain Langeland / NCTC 10281 / Type F) protein is Aspartyl/glutamyl-tRNA(Asn/Gln) amidotransferase subunit B.